The sequence spans 307 residues: MNPLKSPLEGFLNILKPPGMTSHDVVAKARRILREKRIGHMGTLDPDAAGVLPIALGQATRLIELVRGDKSYRAQLLLGRITDSQDVSGRIVEEHPIPQLTRQAWEELLKEFQGLMEQIPPMVSAVSVGGKRLYEYARQGIEVERPSRKINIDRIDIVQYHEHAPGELILDVDCSGGTYIRTLCHDIGQRLGCGAIMGWLIRRRSGPFRLQNSCTLKELEQGLAPEKLVSPGEVLQHLPNMEINERRLPALKQGLAQFLPDKNWMEGQWIRMNYRGQLLAVGQAIWQDDRWLCQPRKVLQWSESILK.

The active-site Nucleophile is aspartate 45.

It belongs to the pseudouridine synthase TruB family. Type 1 subfamily.

It catalyses the reaction uridine(55) in tRNA = pseudouridine(55) in tRNA. Functionally, responsible for synthesis of pseudouridine from uracil-55 in the psi GC loop of transfer RNAs. In Heliobacterium mobile (Heliobacillus mobilis), this protein is tRNA pseudouridine synthase B.